The chain runs to 453 residues: MSQSPKVGFVSLGCPKALVDSEQIITQLRAEGYEISGTYDGADLVVVNTCGFIDEAVQESLDAIGEALTENGKVIVTGCLGAKKSASGSGLIEEVHPKVLAVTGPHAVGEVMQAVHSHLPKPHDPFVDLVPPAGIKLTPRHYAYLKISEGCNHRCTFCIIPSMRGDLVSRPVAEVMLEAENLFKSGVKELLVISQDTSAYGVDVKYRTGFWNGKPIKTRMTDLVAALGELAAQYGAWVRLHYVYPYPSVDEVIPLMAEGPFKGHVLPYLDVPFQHAHPDVLKRMKRPANAEKVLERVQKWREICPDLTIRSTFIAGFPGETEAQFETLLDFIREAELDRVGCFAYSPVEGASANELDGALPDDVREERRARFMEVAEEVSARRIARKVGKTLKVLIDEVSDEGGIGRTAADAPEIDGVVYVEPATKASKRYKVGDFVSVKITGADGHDLWGEV.

Positions 5-120 (PKVGFVSLGC…VMQAVHSHLP (116 aa)) constitute an MTTase N-terminal domain. Residues cysteine 14, cysteine 50, cysteine 79, cysteine 151, cysteine 155, and cysteine 158 each coordinate [4Fe-4S] cluster. Residues 137 to 382 (LTPRHYAYLK…MEVAEEVSAR (246 aa)) form the Radical SAM core domain. The TRAM domain maps to 385–453 (ARKVGKTLKV…ADGHDLWGEV (69 aa)).

Belongs to the methylthiotransferase family. RimO subfamily. [4Fe-4S] cluster serves as cofactor.

Its subcellular location is the cytoplasm. It catalyses the reaction L-aspartate(89)-[ribosomal protein uS12]-hydrogen + (sulfur carrier)-SH + AH2 + 2 S-adenosyl-L-methionine = 3-methylsulfanyl-L-aspartate(89)-[ribosomal protein uS12]-hydrogen + (sulfur carrier)-H + 5'-deoxyadenosine + L-methionine + A + S-adenosyl-L-homocysteine + 2 H(+). Functionally, catalyzes the methylthiolation of an aspartic acid residue of ribosomal protein uS12. The sequence is that of Ribosomal protein uS12 methylthiotransferase RimO from Burkholderia multivorans (strain ATCC 17616 / 249).